Reading from the N-terminus, the 424-residue chain is MRLSDYYVPTLKETSADISVISHKYSIRAGLIKQIASGIYTWLPLGLKVLKNIENIVREEMNKSGSLEILMPLIQPASLWKESGRYDDYGSEMLRITDRNQREMLFGPTHEEVITDILRTTPVSHKDLPLILYQIQWKFRDELRPRYGIMRCREFLMKDAYSFDKDFSGAISSYNLMFKTYIKIFQKLGLTPIAVKADSGPIGGNLSHEFHVLANSGESTLYYDQDIIELMNSESIDVEKIKNTYTAADDMHDPQACPISSDKVKISKGIEIGHIFHLGDKYSKPMNANFCDSNNNKLLQMGCYGIGVSRLVAAIIEVFHDNKGIIWPETVAPFKFSLVNLYTSNDKCKKVAENLHMQLYDDVLYDDTDDSPGIKLARTDLLGMPWQVIIGKSTVEQDLIEVRNRLTKDKVLISTEQFLNKLKK.

This sequence belongs to the class-II aminoacyl-tRNA synthetase family. ProS type 2 subfamily. As to quaternary structure, homodimer.

It localises to the cytoplasm. It catalyses the reaction tRNA(Pro) + L-proline + ATP = L-prolyl-tRNA(Pro) + AMP + diphosphate. Functionally, catalyzes the attachment of proline to tRNA(Pro) in a two-step reaction: proline is first activated by ATP to form Pro-AMP and then transferred to the acceptor end of tRNA(Pro). In Ehrlichia chaffeensis (strain ATCC CRL-10679 / Arkansas), this protein is Proline--tRNA ligase.